We begin with the raw amino-acid sequence, 199 residues long: ATP-dependent Clp protease proteolytic subunit (199 aa).

Catalysis depends on Ser102, which acts as the Nucleophile. His127 is an active-site residue.

The protein belongs to the peptidase S14 family. As to quaternary structure, component of the chloroplastic Clp protease core complex.

The protein localises to the plastid. Its subcellular location is the chloroplast stroma. It carries out the reaction Hydrolysis of proteins to small peptides in the presence of ATP and magnesium. alpha-casein is the usual test substrate. In the absence of ATP, only oligopeptides shorter than five residues are hydrolyzed (such as succinyl-Leu-Tyr-|-NHMec, and Leu-Tyr-Leu-|-Tyr-Trp, in which cleavage of the -Tyr-|-Leu- and -Tyr-|-Trp bonds also occurs).. Functionally, cleaves peptides in various proteins in a process that requires ATP hydrolysis. Has a chymotrypsin-like activity. Plays a major role in the degradation of misfolded proteins. The polypeptide is ATP-dependent Clp protease proteolytic subunit (Physcomitrium patens (Spreading-leaved earth moss)).